A 578-amino-acid polypeptide reads, in one-letter code: Probable arginine--tRNA ligase, mitochondrial (578 aa).

The transit peptide at methionine 1–valine 16 directs the protein to the mitochondrion. L-arginine contacts are provided by residues serine 133–asparagine 135, histidine 144, tyrosine 322, aspartate 326, and glutamine 350. The short motif at serine 133–histidine 144 is the 'HIGH' region element. Lysine 568 carries the N6-acetyllysine modification.

Belongs to the class-I aminoacyl-tRNA synthetase family.

It localises to the mitochondrion membrane. It catalyses the reaction tRNA(Arg) + L-arginine + ATP = L-arginyl-tRNA(Arg) + AMP + diphosphate. Catalyzes the attachment of arginine to tRNA(Arg) in a two-step reaction: arginine is first activated by ATP to form Arg-AMP and then transferred to the acceptor end of tRNA(Arg). In Pongo abelii (Sumatran orangutan), this protein is Probable arginine--tRNA ligase, mitochondrial (RARS2).